Consider the following 478-residue polypeptide: Solute carrier family 49 member 4 (478 aa).

Residues 1–27 (MGSGWSSEEEERQPLLGPGLGPAPGAA) form a disordered region. The Cytoplasmic portion of the chain corresponds to 1–51 (MGSGWSSEEEERQPLLGPGLGPAPGAARRGREATAVLPAAGPNPGRVYGRR). Positions 15–16 (LL) match the Di-leucine motif; mediates lysosomal localization motif. Residues 52 to 72 (WLVLLLFSLLAFAQGLVWNTW) traverse the membrane as a helical segment. At 73-89 (GPIQNSARQAYGFSGWD) the chain is on the lumenal side. The chain crosses the membrane as a helical span at residues 90-110 (IALLVLWGPIGFLPCFAFMWL). Topologically, residues 111 to 117 (LDKRGLR) are cytoplasmic. A helical membrane pass occupies residues 118-138 (VTVLLTSFLMVLGTGLRCIPV). Residues 139 to 152 (SDLALKKRLIHGGQ) are Lumenal-facing. Residues 153–173 (ILNGLAGPTVMNAAPFLSTTW) traverse the membrane as a helical segment. Residues 174–184 (FSADERATATA) lie on the Cytoplasmic side of the membrane. The helical transmembrane segment at 185 to 205 (IASMLSYLGGACAFLVGPLVV) threads the bilayer. Topologically, residues 206–229 (PAPNGTAPLLAAESSRAHIKDRIE) are lumenal. Asn-209 carries N-linked (GlcNAc...) asparagine glycosylation. Residues 230 to 250 (TVLYAEFGVVCLIFSATLAYF) form a helical membrane-spanning segment. Residues 251 to 281 (PPRPPLPPSVAAASQRLSYRRSFCRLLSNLR) lie on the Cytoplasmic side of the membrane. A helical transmembrane segment spans residues 282-302 (FLMIALAYAIPLGVFAGWSGV). The Lumenal portion of the chain corresponds to 303–314 (LDLILTPVHVSQ). Residues 315–335 (VDAGWIGFWSIVGGCVVGIAM) traverse the membrane as a helical segment. Residues 336–347 (ARFADFIRGMLK) are Cytoplasmic-facing. A helical membrane pass occupies residues 348–368 (LILLLLFSGATLSSTWFTLTC). The Lumenal portion of the chain corresponds to 369–384 (LNSITHLPLTTVTLYA). A helical transmembrane segment spans residues 385-405 (SCILLGVFLNSSVPIFFELFV). Residues 406-414 (ETVYPVPEG) lie on the Cytoplasmic side of the membrane. The chain crosses the membrane as a helical span at residues 415 to 435 (ITCGVVTFLSNMFMGVLLFFV). Residues 436–442 (TFYHTEL) lie on the Lumenal side of the membrane. Residues 443-463 (SWFNWCLPGSCLLSLLLILCF) traverse the membrane as a helical segment. The Cytoplasmic segment spans residues 464-478 (RESYDRLYLDVVVSV).

It belongs to the major facilitator superfamily. Post-translationally, cleaved in lysosomes by cathepsin L between Leu-214 and Ala-261, generating a N-glycosylated N-terminal and a non-glycosylated C-terminal fragment.

It localises to the lysosome membrane. It carries out the reaction pyridoxine(out) + n H(+)(out) = pyridoxine(in) + n H(+)(in). Its function is as follows. Mediates H(+)-dependent pyridoxine transport. This Mus musculus (Mouse) protein is Solute carrier family 49 member 4 (Slc49a4).